The sequence spans 230 residues: MALSIFKDLPGEHPRNLIPSLCRQFYHLGWVTGTGGGMSIKYNNEIYIAPSGVQKERMQPEDLFVQDIDGKDLQLPPEIKGLSKSQCTPLFMLAYRHRNAGAVIHTHSQHAVMATLLWPGKTFRCTHLEMIKGVYDEADKRYLRYDEQLVVPIIENTPFERDLADSMYAAMMEYPGCSAVLVRRHGVYVWGQTWEKTKTMSECYDYLFSIAVQMKQAGLDPEKFENALQA.

Cysteine 87 is a substrate binding site. Zn(2+) contacts are provided by histidine 105 and histidine 107. The active-site Proton donor/acceptor is glutamate 129. Residue histidine 185 coordinates Zn(2+).

The protein belongs to the aldolase class II family. MtnB subfamily. Zn(2+) serves as cofactor.

It localises to the cytoplasm. The enzyme catalyses 5-(methylsulfanyl)-D-ribulose 1-phosphate = 5-methylsulfanyl-2,3-dioxopentyl phosphate + H2O. It participates in amino-acid biosynthesis; L-methionine biosynthesis via salvage pathway; L-methionine from S-methyl-5-thio-alpha-D-ribose 1-phosphate: step 2/6. Functionally, catalyzes the dehydration of methylthioribulose-1-phosphate (MTRu-1-P) into 2,3-diketo-5-methylthiopentyl-1-phosphate (DK-MTP-1-P). The polypeptide is Probable methylthioribulose-1-phosphate dehydratase (Drosophila virilis (Fruit fly)).